Reading from the N-terminus, the 322-residue chain is UDP-N-acetylenolpyruvoylglucosamine reductase (322 aa).

In terms of domain architecture, FAD-binding PCMH-type spans 36–202 (RAGGPAQVLF…TSVLFEGVPG (167 aa)). Residue arginine 182 is part of the active site. Residue serine 231 is the Proton donor of the active site. Glutamate 301 is an active-site residue.

This sequence belongs to the MurB family. FAD is required as a cofactor.

The protein localises to the cytoplasm. The catalysed reaction is UDP-N-acetyl-alpha-D-muramate + NADP(+) = UDP-N-acetyl-3-O-(1-carboxyvinyl)-alpha-D-glucosamine + NADPH + H(+). The protein operates within cell wall biogenesis; peptidoglycan biosynthesis. In terms of biological role, cell wall formation. This chain is UDP-N-acetylenolpyruvoylglucosamine reductase, found in Brucella suis biovar 1 (strain 1330).